Reading from the N-terminus, the 59-residue chain is Large ribosomal subunit protein bL32 (59 aa).

It belongs to the bacterial ribosomal protein bL32 family.

This is Large ribosomal subunit protein bL32 from Anaeromyxobacter dehalogenans (strain 2CP-C).